We begin with the raw amino-acid sequence, 607 residues long: Homologous recombination OB-fold protein (607 aa).

Disordered regions lie at residues 25 to 49, 84 to 108, 196 to 308, and 531 to 581; these read LRPN…SYPA, ISSS…SGRQ, PWPS…TTVT, and LKPP…DDLD. Composition is skewed to polar residues over residues 27–49 and 92–108; these read PNSS…SYPA and QQRM…SGRQ. S30 is subject to Phosphoserine. Position 281 is an asymmetric dimethylarginine (R281). Residues 295–308 show a composition bias toward low complexity; it reads SPFSTPRSTSTTVT. Acidic residues predominate over residues 570–581; it reads PEEELPEADDLD.

Interacts with MCM8; this interaction is necessary for MCM8-MCM9 helicase complex recruitment to DNA damage sites. Interacts with RPA1; this interaction associates HROB with the RPA complex.

Its subcellular location is the nucleus. The protein resides in the chromosome. Functionally, DNA-binding protein involved in homologous recombination that acts by recruiting the MCM8-MCM9 helicase complex to sites of DNA damage to promote DNA repair synthesis. The polypeptide is Homologous recombination OB-fold protein (Rattus norvegicus (Rat)).